The primary structure comprises 309 residues: Homoserine kinase (309 aa).

Residue 91–101 (PIGSGLGSSAC) coordinates ATP.

It belongs to the GHMP kinase family. Homoserine kinase subfamily.

The protein localises to the cytoplasm. The catalysed reaction is L-homoserine + ATP = O-phospho-L-homoserine + ADP + H(+). Its pathway is amino-acid biosynthesis; L-threonine biosynthesis; L-threonine from L-aspartate: step 4/5. Functionally, catalyzes the ATP-dependent phosphorylation of L-homoserine to L-homoserine phosphate. This Serratia marcescens protein is Homoserine kinase (thrB).